Consider the following 260-residue polypeptide: Small ribosomal subunit protein uS2 (260 aa).

This sequence belongs to the universal ribosomal protein uS2 family.

This Streptococcus gordonii (strain Challis / ATCC 35105 / BCRC 15272 / CH1 / DL1 / V288) protein is Small ribosomal subunit protein uS2.